Consider the following 473-residue polypeptide: tRNA modification GTPase MnmE (473 aa).

3 residues coordinate (6S)-5-formyl-5,6,7,8-tetrahydrofolate: R28, E93, and R132. A TrmE-type G domain is found at 228-394 (GVATVLVGSP…LKQQMSNMVA (167 aa)). GTP contacts are provided by residues 238–243 (NAGKST), 257–263 (SHQPGTT), and 282–285 (DTAG). Residues S242 and T263 each contribute to the Mg(2+) site. K473 is a binding site for (6S)-5-formyl-5,6,7,8-tetrahydrofolate.

This sequence belongs to the TRAFAC class TrmE-Era-EngA-EngB-Septin-like GTPase superfamily. TrmE GTPase family. As to quaternary structure, homodimer. Heterotetramer of two MnmE and two MnmG subunits. K(+) serves as cofactor.

The protein resides in the cytoplasm. Its function is as follows. Exhibits a very high intrinsic GTPase hydrolysis rate. Involved in the addition of a carboxymethylaminomethyl (cmnm) group at the wobble position (U34) of certain tRNAs, forming tRNA-cmnm(5)s(2)U34. The protein is tRNA modification GTPase MnmE of Chlorobium chlorochromatii (strain CaD3).